The primary structure comprises 437 residues: MDKKFYITTLGCPKNIADSMSMHHSLLEEGFTPASLPEESDFHFINTCTFIQSATEETIQTILSAAQVKKQNHQKLVVVGCFAERYPDNIHSEIPEVDLFFGTGKYSQAGKILREKFPELSPSQLEFNDSLLERWKLSSKIENYSKPYAYVKVSDGCNRGCSFCIIPSFRGKFAESPLDDILRDTNRAIRAGAKEICLVSQDTVYYGRDSEILLDMVRKVAEIDSLEILRLLYLYPDKKTEKLIRLMGETSKIAPYLESPLQHVSSKILKVMNRTGESSYFKDLFSLAREVKPGLEIRTSFIIGYPGEEPEDVDQILRFIEDTRPEKVNLFSYSPQEGTKGAQLKQTVSEKEKSKRINLIRDSHLEILEEIHESRIGRTYDAIVDGIEDGQAVVRRFQDAPEMDEVVYVDDVSLLPGRIGKVRIDSFYEYDMNGTWV.

Positions Lys3 to Pro118 constitute an MTTase N-terminal domain. Cys12, Cys48, Cys81, Cys157, Cys161, and Cys164 together coordinate [4Fe-4S] cluster. The region spanning Asn143–Glu370 is the Radical SAM core domain. The region spanning Glu373–Val437 is the TRAM domain.

It belongs to the methylthiotransferase family. RimO subfamily. [4Fe-4S] cluster is required as a cofactor.

It is found in the cytoplasm. It catalyses the reaction L-aspartate(89)-[ribosomal protein uS12]-hydrogen + (sulfur carrier)-SH + AH2 + 2 S-adenosyl-L-methionine = 3-methylsulfanyl-L-aspartate(89)-[ribosomal protein uS12]-hydrogen + (sulfur carrier)-H + 5'-deoxyadenosine + L-methionine + A + S-adenosyl-L-homocysteine + 2 H(+). In terms of biological role, catalyzes the methylthiolation of an aspartic acid residue of ribosomal protein uS12. The chain is Ribosomal protein uS12 methylthiotransferase RimO from Leptospira interrogans serogroup Icterohaemorrhagiae serovar copenhageni (strain Fiocruz L1-130).